The sequence spans 95 residues: Protein RnfH (95 aa).

It belongs to the UPF0125 (RnfH) family.

The chain is Protein RnfH from Methylococcus capsulatus (strain ATCC 33009 / NCIMB 11132 / Bath).